A 332-amino-acid polypeptide reads, in one-letter code: Ketol-acid reductoisomerase (NADP(+)) (332 aa).

Residues 3-183 (TEIFYDADAD…GGARAGVIKT (181 aa)) form the KARI N-terminal Rossmann domain. NADP(+)-binding positions include 26–29 (YGSQ), Ser-52, Ser-54, and 84–87 (DTKQ). His-109 is an active-site residue. Gly-135 contacts NADP(+). The KARI C-terminal knotted domain maps to 184 to 329 (TFTEETETDL…KKLRSLMSWT (146 aa)). Positions 192, 196, 228, and 232 each coordinate Mg(2+). Ser-253 is a substrate binding site.

The protein belongs to the ketol-acid reductoisomerase family. The cofactor is Mg(2+).

The enzyme catalyses (2R)-2,3-dihydroxy-3-methylbutanoate + NADP(+) = (2S)-2-acetolactate + NADPH + H(+). It carries out the reaction (2R,3R)-2,3-dihydroxy-3-methylpentanoate + NADP(+) = (S)-2-ethyl-2-hydroxy-3-oxobutanoate + NADPH + H(+). It participates in amino-acid biosynthesis; L-isoleucine biosynthesis; L-isoleucine from 2-oxobutanoate: step 2/4. The protein operates within amino-acid biosynthesis; L-valine biosynthesis; L-valine from pyruvate: step 2/4. Involved in the biosynthesis of branched-chain amino acids (BCAA). Catalyzes an alkyl-migration followed by a ketol-acid reduction of (S)-2-acetolactate (S2AL) to yield (R)-2,3-dihydroxy-isovalerate. In the isomerase reaction, S2AL is rearranged via a Mg-dependent methyl migration to produce 3-hydroxy-3-methyl-2-ketobutyrate (HMKB). In the reductase reaction, this 2-ketoacid undergoes a metal-dependent reduction by NADPH to yield (R)-2,3-dihydroxy-isovalerate. The protein is Ketol-acid reductoisomerase (NADP(+)) of Saccharopolyspora erythraea (strain ATCC 11635 / DSM 40517 / JCM 4748 / NBRC 13426 / NCIMB 8594 / NRRL 2338).